The chain runs to 458 residues: ATP synthase subunit beta (458 aa).

Residue 148–155 (GGAGVGKT) participates in ATP binding.

This sequence belongs to the ATPase alpha/beta chains family. F-type ATPases have 2 components, CF(1) - the catalytic core - and CF(0) - the membrane proton channel. CF(1) has five subunits: alpha(3), beta(3), gamma(1), delta(1), epsilon(1). CF(0) has three main subunits: a(1), b(2) and c(9-12). The alpha and beta chains form an alternating ring which encloses part of the gamma chain. CF(1) is attached to CF(0) by a central stalk formed by the gamma and epsilon chains, while a peripheral stalk is formed by the delta and b chains.

The protein resides in the cell inner membrane. The catalysed reaction is ATP + H2O + 4 H(+)(in) = ADP + phosphate + 5 H(+)(out). Produces ATP from ADP in the presence of a proton gradient across the membrane. The catalytic sites are hosted primarily by the beta subunits. This chain is ATP synthase subunit beta, found in Shewanella piezotolerans (strain WP3 / JCM 13877).